We begin with the raw amino-acid sequence, 501 residues long: ATP synthase subunit alpha, chloroplastic (501 aa).

Position 170 to 177 (170 to 177) interacts with ATP; sequence GDRQTGKT.

The protein belongs to the ATPase alpha/beta chains family. In terms of assembly, F-type ATPases have 2 components, CF(1) - the catalytic core - and CF(0) - the membrane proton channel. CF(1) has five subunits: alpha(3), beta(3), gamma(1), delta(1), epsilon(1). CF(0) has four main subunits: a, b, b' and c.

Its subcellular location is the plastid. The protein localises to the chloroplast thylakoid membrane. It catalyses the reaction ATP + H2O + 4 H(+)(in) = ADP + phosphate + 5 H(+)(out). Produces ATP from ADP in the presence of a proton gradient across the membrane. The alpha chain is a regulatory subunit. This chain is ATP synthase subunit alpha, chloroplastic, found in Pisum sativum (Garden pea).